The following is a 364-amino-acid chain: Putative galactoside 2-alpha-L-fucosyltransferase svh-11 (364 aa).

The Cytoplasmic segment spans residues 1–19 (MRLFHFLKFLTINNFSRYC). Residues 20–42 (LKIVKVHIIWITIICIIYFNWRF) traverse the membrane as a helical; Signal-anchor for type II membrane protein segment. Topologically, residues 43-364 (KKLDFMAIPY…SANSFTVVRS (322 aa)) are lumenal. Residues Asn60 and Asn128 are each glycosylated (N-linked (GlcNAc...) asparagine).

The protein belongs to the glycosyltransferase 11 family.

It localises to the golgi apparatus. Its subcellular location is the golgi stack membrane. Mediates the transfer of fucose to the terminal galactose on glycan chains of cell surface glycoproteins and glycolipids. Required for axon regeneration after injury. The protein is Putative galactoside 2-alpha-L-fucosyltransferase svh-11 of Caenorhabditis elegans.